A 278-amino-acid chain; its full sequence is Juvenile hormone acid O-methyltransferase (278 aa).

This sequence belongs to the methyltransferase superfamily. In terms of tissue distribution, specifically expressed in the corpora allata (CA).

It catalyses the reaction (2E,6E)-farnesoate + S-adenosyl-L-methionine = methyl (2E,6E)-farnesoate + S-adenosyl-L-homocysteine. The catalysed reaction is juvenile hormone III carboxylate + S-adenosyl-L-methionine = juvenile hormone III + S-adenosyl-L-homocysteine. Its function is as follows. O-methyltransferase that transfers a methyl group from S-adenosyl-L-methionine (SAM) to the carboxyl group of juvenile hormone acids to produce active juvenile hormones in the corpora allata, the last step during juvenile hormone biosynthesis. Also able to methylate farnesoate to methyl farnesoate. This is Juvenile hormone acid O-methyltransferase from Bombyx mori (Silk moth).